Here is a 171-residue protein sequence, read N- to C-terminus: Glycine cleavage system H protein 4 (171 aa).

Residues 30-112 enclose the Lipoyl-binding domain; that stretch reads FAEVGITDYA…YEAGWIAVIE (83 aa). N6-lipoyllysine is present on Lys-71. Residues 139–171 are disordered; sequence EKEEEVEVKEEELIETESIEELSEEELGYEENK.

It belongs to the GcvH family. In terms of assembly, the glycine cleavage system is composed of four proteins: P, T, L and H. The cofactor is (R)-lipoate.

Its function is as follows. The glycine cleavage system catalyzes the degradation of glycine. The H protein shuttles the methylamine group of glycine from the P protein to the T protein. This Aquifex aeolicus (strain VF5) protein is Glycine cleavage system H protein 4.